A 422-amino-acid chain; its full sequence is UDP-N-acetylglucosamine 1-carboxyvinyltransferase (422 aa).

22–23 (KN) serves as a coordination point for phosphoenolpyruvate. Arginine 94 is a UDP-N-acetyl-alpha-D-glucosamine binding site. Cysteine 118 serves as the catalytic Proton donor. A 2-(S-cysteinyl)pyruvic acid O-phosphothioketal modification is found at cysteine 118. UDP-N-acetyl-alpha-D-glucosamine-binding positions include 123-127 (RPVDL), aspartate 308, and isoleucine 330.

It belongs to the EPSP synthase family. MurA subfamily.

It localises to the cytoplasm. It carries out the reaction phosphoenolpyruvate + UDP-N-acetyl-alpha-D-glucosamine = UDP-N-acetyl-3-O-(1-carboxyvinyl)-alpha-D-glucosamine + phosphate. It functions in the pathway cell wall biogenesis; peptidoglycan biosynthesis. In terms of biological role, cell wall formation. Adds enolpyruvyl to UDP-N-acetylglucosamine. This chain is UDP-N-acetylglucosamine 1-carboxyvinyltransferase, found in Dinoroseobacter shibae (strain DSM 16493 / NCIMB 14021 / DFL 12).